Consider the following 153-residue polypeptide: Interleukin-4 (153 aa).

An N-terminal signal peptide occupies residues 1–24; that stretch reads MGLTSQLLPPLFFLLACAGNFAHG. Intrachain disulfides connect Cys-27–Cys-151, Cys-48–Cys-89, and Cys-70–Cys-123. A glycan (N-linked (GlcNAc...) asparagine) is linked at Asn-62.

The protein belongs to the IL-4/IL-13 family.

The protein resides in the secreted. Functionally, participates in at least several B-cell activation processes as well as of other cell types. It is a costimulator of DNA-synthesis. It induces the expression of class II MHC molecules on resting B-cells. It enhances both secretion and cell surface expression of IgE and IgG1. It also regulates the expression of the low affinity Fc receptor for IgE (CD23) on both lymphocytes and monocytes. Positively regulates IL31RA expression in macrophages. Stimulates autophagy in dendritic cells by interfering with mTORC1 signaling and through the induction of RUFY4. The chain is Interleukin-4 (IL4) from Papio anubis (Olive baboon).